The following is a 159-amino-acid chain: Ribosomal RNA large subunit methyltransferase H (159 aa).

S-adenosyl-L-methionine contacts are provided by residues Gly-108 and 127 to 132 (FSKMTF).

This sequence belongs to the RNA methyltransferase RlmH family. Homodimer.

It localises to the cytoplasm. It catalyses the reaction pseudouridine(1915) in 23S rRNA + S-adenosyl-L-methionine = N(3)-methylpseudouridine(1915) in 23S rRNA + S-adenosyl-L-homocysteine + H(+). Its function is as follows. Specifically methylates the pseudouridine at position 1915 (m3Psi1915) in 23S rRNA. This chain is Ribosomal RNA large subunit methyltransferase H, found in Clostridium acetobutylicum (strain ATCC 824 / DSM 792 / JCM 1419 / IAM 19013 / LMG 5710 / NBRC 13948 / NRRL B-527 / VKM B-1787 / 2291 / W).